Reading from the N-terminus, the 120-residue chain is NAD(P)H-quinone oxidoreductase subunit 3, chloroplastic (120 aa).

Helical transmembrane passes span 9–29, 64–84, and 88–108; these read IFWA…LISG, MFAL…PWAM, and VLGV…IVGL.

This sequence belongs to the complex I subunit 3 family. In terms of assembly, NDH is composed of at least 16 different subunits, 5 of which are encoded in the nucleus.

The protein localises to the plastid. Its subcellular location is the chloroplast thylakoid membrane. The enzyme catalyses a plastoquinone + NADH + (n+1) H(+)(in) = a plastoquinol + NAD(+) + n H(+)(out). The catalysed reaction is a plastoquinone + NADPH + (n+1) H(+)(in) = a plastoquinol + NADP(+) + n H(+)(out). Its function is as follows. NDH shuttles electrons from NAD(P)H:plastoquinone, via FMN and iron-sulfur (Fe-S) centers, to quinones in the photosynthetic chain and possibly in a chloroplast respiratory chain. The immediate electron acceptor for the enzyme in this species is believed to be plastoquinone. Couples the redox reaction to proton translocation, and thus conserves the redox energy in a proton gradient. This chain is NAD(P)H-quinone oxidoreductase subunit 3, chloroplastic, found in Lupinus luteus (European yellow lupine).